Reading from the N-terminus, the 211-residue chain is Small ribosomal subunit protein eS8 (211 aa).

It belongs to the eukaryotic ribosomal protein eS8 family.

This Dictyostelium discoideum (Social amoeba) protein is Small ribosomal subunit protein eS8 (rps8).